The following is a 134-amino-acid chain: Small ribosomal subunit protein bS16 (134 aa).

Positions 115-134 are disordered; that stretch reads AKLRRRQAKKAAEAAGSAEG.

This sequence belongs to the bacterial ribosomal protein bS16 family.

This is Small ribosomal subunit protein bS16 from Chlorobaculum tepidum (strain ATCC 49652 / DSM 12025 / NBRC 103806 / TLS) (Chlorobium tepidum).